The sequence spans 445 residues: UDP-N-acetylmuramoylalanine--D-glutamate ligase (445 aa).

Residue 111-117 participates in ATP binding; that stretch reads GTNGKST.

Belongs to the MurCDEF family.

It localises to the cytoplasm. It catalyses the reaction UDP-N-acetyl-alpha-D-muramoyl-L-alanine + D-glutamate + ATP = UDP-N-acetyl-alpha-D-muramoyl-L-alanyl-D-glutamate + ADP + phosphate + H(+). Its pathway is cell wall biogenesis; peptidoglycan biosynthesis. Functionally, cell wall formation. Catalyzes the addition of glutamate to the nucleotide precursor UDP-N-acetylmuramoyl-L-alanine (UMA). The sequence is that of UDP-N-acetylmuramoylalanine--D-glutamate ligase (murD) from Rickettsia prowazekii (strain Madrid E).